Consider the following 1165-residue polypeptide: Autophagy-related protein 11 (1165 aa).

Coiled-coil stretches lie at residues 239 to 304 (NKLN…YKNM) and 670 to 853 (DNIR…KQKK).

It belongs to the ATG11 family. In terms of assembly, homodimer and potential homooligomers.

Its subcellular location is the preautophagosomal structure membrane. Its function is as follows. Plays an essential role in both non-selective and selective autophagy such as mitophagy. Recruits mitochondria for their selective degradation via autophagy (mitophagy) during starvation, through its interaction with ATG32. Works as scaffold proteins that recruit ATG proteins to the pre-autophagosome (PAS), the site of vesicle/autophagosome formation. Required for ATG9 anterograde transport from the mitochondria to the PAS. This Candida albicans (strain SC5314 / ATCC MYA-2876) (Yeast) protein is Autophagy-related protein 11.